Here is an 850-residue protein sequence, read N- to C-terminus: Receptor-like protein kinase ANXUR1 (850 aa).

Positions 1-26 (MSGKTRILFFLTCLSFLLVFPTRSNG) are cleaved as a signal peptide. Topologically, residues 27–429 (QDLALSCGTS…KKEFKNEKRH (403 aa)) are extracellular. N-linked (GlcNAc...) asparagine glycans are attached at residues N114, N132, N292, N302, and N330. A helical membrane pass occupies residues 430–450 (AFIIGSAGGVLAVLIGALCFT). Residues 451 to 850 (AYKKKQGYQG…FSQIVNPKGR (400 aa)) are Cytoplasmic-facing. The region spanning 517-790 (FDDSNVIGVG…GDVLWNLEFA (274 aa)) is the Protein kinase domain. Residues 523–531 (IGVGGFGKV) and K545 contribute to the ATP site. D641 functions as the Proton acceptor in the catalytic mechanism. Residues 796–850 (TADGTRHRTPNNGGSSEDLGRGGMAVNVAGRDDVSDLSSEDNTEIFSQIVNPKGR) are disordered. Residues 839 to 850 (EIFSQIVNPKGR) are compositionally biased toward polar residues.

The protein belongs to the protein kinase superfamily. Ser/Thr protein kinase family. In terms of tissue distribution, expressed in pollen, but not in pistils or seedlings.

The protein resides in the cell membrane. The catalysed reaction is L-seryl-[protein] + ATP = O-phospho-L-seryl-[protein] + ADP + H(+). The enzyme catalyses L-threonyl-[protein] + ATP = O-phospho-L-threonyl-[protein] + ADP + H(+). In terms of biological role, receptor-like protein kinase that controls pollen tube behavior by directing rupture at proper timing to release the sperm cell. This is Receptor-like protein kinase ANXUR1 (ANX1) from Arabidopsis thaliana (Mouse-ear cress).